The following is a 177-amino-acid chain: Large ribosomal subunit protein uL6 (177 aa).

The protein belongs to the universal ribosomal protein uL6 family. Part of the 50S ribosomal subunit.

Its function is as follows. This protein binds to the 23S rRNA, and is important in its secondary structure. It is located near the subunit interface in the base of the L7/L12 stalk, and near the tRNA binding site of the peptidyltransferase center. The polypeptide is Large ribosomal subunit protein uL6 (Methylobacterium sp. (strain 4-46)).